The sequence spans 223 residues: MOB kinase activator-like 4 (223 aa).

The segment at 1–21 (MKMADGSTILRRNRPGTKSKD) is disordered. Residues Cys92, Cys97, His169, and His174 each contribute to the Zn(2+) site.

The protein belongs to the MOB1/phocein family.

The chain is MOB kinase activator-like 4 (Mob4) from Drosophila melanogaster (Fruit fly).